The chain runs to 210 residues: Leucyl/phenylalanyl-tRNA--protein transferase (210 aa).

It belongs to the L/F-transferase family.

The protein localises to the cytoplasm. It catalyses the reaction N-terminal L-lysyl-[protein] + L-leucyl-tRNA(Leu) = N-terminal L-leucyl-L-lysyl-[protein] + tRNA(Leu) + H(+). The catalysed reaction is N-terminal L-arginyl-[protein] + L-leucyl-tRNA(Leu) = N-terminal L-leucyl-L-arginyl-[protein] + tRNA(Leu) + H(+). It carries out the reaction L-phenylalanyl-tRNA(Phe) + an N-terminal L-alpha-aminoacyl-[protein] = an N-terminal L-phenylalanyl-L-alpha-aminoacyl-[protein] + tRNA(Phe). Functions in the N-end rule pathway of protein degradation where it conjugates Leu, Phe and, less efficiently, Met from aminoacyl-tRNAs to the N-termini of proteins containing an N-terminal arginine or lysine. This Ruegeria pomeroyi (strain ATCC 700808 / DSM 15171 / DSS-3) (Silicibacter pomeroyi) protein is Leucyl/phenylalanyl-tRNA--protein transferase.